Reading from the N-terminus, the 548-residue chain is CTP synthase (548 aa).

The tract at residues 1–267 is amidoligase domain; sequence MKTKFIFITG…DQKIAIMLQL (267 aa). S14 contacts CTP. S14 serves as a coordination point for UTP. Residues 15-20 and D72 each bind ATP; that span reads SLGKGL. Residues D72 and E141 each contribute to the Mg(2+) site. Residues 148–150, 188–193, and K224 each bind CTP; these read DIE and KTKPTQ. UTP is bound by residues 188-193 and K224; that span reads KTKPTQ. Positions 292 to 545 constitute a Glutamine amidotransferase type-1 domain; sequence TIGIVGKYVD…IKAAGKQAVK (254 aa). Residue G354 coordinates L-glutamine. The active-site Nucleophile; for glutamine hydrolysis is C381. L-glutamine is bound by residues 382–385, E405, and R473; that span reads LGMQ. Active-site residues include H518 and E520.

The protein belongs to the CTP synthase family. In terms of assembly, homotetramer.

It catalyses the reaction UTP + L-glutamine + ATP + H2O = CTP + L-glutamate + ADP + phosphate + 2 H(+). The catalysed reaction is L-glutamine + H2O = L-glutamate + NH4(+). The enzyme catalyses UTP + NH4(+) + ATP = CTP + ADP + phosphate + 2 H(+). Its pathway is pyrimidine metabolism; CTP biosynthesis via de novo pathway; CTP from UDP: step 2/2. Allosterically activated by GTP, when glutamine is the substrate; GTP has no effect on the reaction when ammonia is the substrate. The allosteric effector GTP functions by stabilizing the protein conformation that binds the tetrahedral intermediate(s) formed during glutamine hydrolysis. Inhibited by the product CTP, via allosteric rather than competitive inhibition. Its function is as follows. Catalyzes the ATP-dependent amination of UTP to CTP with either L-glutamine or ammonia as the source of nitrogen. Regulates intracellular CTP levels through interactions with the four ribonucleotide triphosphates. The protein is CTP synthase of Oleidesulfovibrio alaskensis (strain ATCC BAA-1058 / DSM 17464 / G20) (Desulfovibrio alaskensis).